Consider the following 87-residue polypeptide: Guanine nucleotide-binding protein subunit gamma (87 aa).

Residue Cys-84 is modified to Cysteine methyl ester. Cys-84 is lipidated: S-geranylgeranyl cysteine. The propeptide at 85-87 (LLV) is removed in mature form.

It belongs to the G protein gamma family. As to quaternary structure, g proteins are composed of 3 units, alpha, beta and gamma. Post-translationally, the N-terminus is blocked.

It localises to the cell membrane. Guanine nucleotide-binding proteins (G proteins) are involved as a modulator or transducer in various transmembrane signaling systems. This major G-protein of the squid photoreceptor is involved in visual transduction. The beta and gamma chains are required for the GTPase activity, for replacement of GDP by GTP, and for G protein-effector interaction. In Loligo forbesii (Veined squid), this protein is Guanine nucleotide-binding protein subunit gamma.